A 654-amino-acid polypeptide reads, in one-letter code: tRNA 5-methylaminomethyl-2-thiouridine biosynthesis bifunctional protein MnmC (654 aa).

The tract at residues 1–236 (MPTLLQHAQI…KWEVMSGAYV (236 aa)) is tRNA (mnm(5)s(2)U34)-methyltransferase. Residues 262-654 (IGAGLAGSSS…FGLRRLIRGK (393 aa)) form an FAD-dependent cmnm(5)s(2)U34 oxidoreductase region.

The protein in the N-terminal section; belongs to the methyltransferase superfamily. tRNA (mnm(5)s(2)U34)-methyltransferase family. This sequence in the C-terminal section; belongs to the DAO family. It depends on FAD as a cofactor.

It is found in the cytoplasm. The enzyme catalyses 5-aminomethyl-2-thiouridine(34) in tRNA + S-adenosyl-L-methionine = 5-methylaminomethyl-2-thiouridine(34) in tRNA + S-adenosyl-L-homocysteine + H(+). Its function is as follows. Catalyzes the last two steps in the biosynthesis of 5-methylaminomethyl-2-thiouridine (mnm(5)s(2)U) at the wobble position (U34) in tRNA. Catalyzes the FAD-dependent demodification of cmnm(5)s(2)U34 to nm(5)s(2)U34, followed by the transfer of a methyl group from S-adenosyl-L-methionine to nm(5)s(2)U34, to form mnm(5)s(2)U34. This is tRNA 5-methylaminomethyl-2-thiouridine biosynthesis bifunctional protein MnmC from Pseudomonas putida (strain ATCC 47054 / DSM 6125 / CFBP 8728 / NCIMB 11950 / KT2440).